Consider the following 466-residue polypeptide: Uronate isomerase (466 aa).

This sequence belongs to the metallo-dependent hydrolases superfamily. Uronate isomerase family.

It catalyses the reaction D-glucuronate = D-fructuronate. The catalysed reaction is aldehydo-D-galacturonate = keto-D-tagaturonate. Its pathway is carbohydrate metabolism; pentose and glucuronate interconversion. The chain is Uronate isomerase from Streptococcus agalactiae serotype V (strain ATCC BAA-611 / 2603 V/R).